The following is a 286-amino-acid chain: Ribose-5-phosphate isomerase (286 aa).

The protein belongs to the ribose 5-phosphate isomerase family.

Its subcellular location is the cytoplasm. The catalysed reaction is aldehydo-D-ribose 5-phosphate = D-ribulose 5-phosphate. It functions in the pathway carbohydrate degradation; pentose phosphate pathway; D-ribose 5-phosphate from D-ribulose 5-phosphate (non-oxidative stage): step 1/1. The polypeptide is Ribose-5-phosphate isomerase (RKI1) (Mycosarcoma maydis (Corn smut fungus)).